Consider the following 661-residue polypeptide: Acetyl-coenzyme A synthetase (661 aa).

Residues 197 to 200 and Thr320 contribute to the CoA site; that span reads RGGK. Residues 396–398, 420–425, Asp511, and Arg526 contribute to the ATP site; these read GEP and DTWWQT. CoA is bound at residue Ser534. Arg537 contacts ATP. Residues Val548 and Val553 each contribute to the Mg(2+) site. Lys620 carries the post-translational modification N6-acetyllysine.

This sequence belongs to the ATP-dependent AMP-binding enzyme family. Mg(2+) is required as a cofactor. In terms of processing, acetylated. Deacetylation by the SIR2-homolog deacetylase activates the enzyme.

It catalyses the reaction acetate + ATP + CoA = acetyl-CoA + AMP + diphosphate. Its function is as follows. Catalyzes the conversion of acetate into acetyl-CoA (AcCoA), an essential intermediate at the junction of anabolic and catabolic pathways. AcsA undergoes a two-step reaction. In the first half reaction, AcsA combines acetate with ATP to form acetyl-adenylate (AcAMP) intermediate. In the second half reaction, it can then transfer the acetyl group from AcAMP to the sulfhydryl group of CoA, forming the product AcCoA. This is Acetyl-coenzyme A synthetase from Leptospira interrogans serogroup Icterohaemorrhagiae serovar copenhageni (strain Fiocruz L1-130).